An 843-amino-acid chain; its full sequence is Lon protease (843 aa).

The span at 1 to 16 (MRERKETAMSDKEKKG) shows a compositional bias: basic and acidic residues. The tract at residues 1–22 (MRERKETAMSDKEKKGAGAGAQ) is disordered. Residues 42-236 (LPILPLRNSV…LVLELLNRKR (195 aa)) form the Lon N-terminal domain. 388-395 (GPPGVGKT) provides a ligand contact to ATP. The region spanning 627 to 808 (TEIAGVATGL…DEVLQAALEE (182 aa)) is the Lon proteolytic domain. Residues serine 714 and lysine 757 contribute to the active site. A disordered region spans residues 805 to 843 (ALEENPVGRKPPAAPEPEGEKKPGATPTPPAKKPDEIRV).

This sequence belongs to the peptidase S16 family. As to quaternary structure, homohexamer. Organized in a ring with a central cavity.

It localises to the cytoplasm. It carries out the reaction Hydrolysis of proteins in presence of ATP.. Its function is as follows. ATP-dependent serine protease that mediates the selective degradation of mutant and abnormal proteins as well as certain short-lived regulatory proteins. Required for cellular homeostasis and for survival from DNA damage and developmental changes induced by stress. Degrades polypeptides processively to yield small peptide fragments that are 5 to 10 amino acids long. Binds to DNA in a double-stranded, site-specific manner. This is Lon protease from Anaeromyxobacter dehalogenans (strain 2CP-C).